Reading from the N-terminus, the 143-residue chain is MAKKITAYIKLQVKAAQANPSPPVGPALGQHGVNIMEFCKAFNARTQGIEPGLPTPVIITVYSDRSFTFETKSTPASVLLKKAAGLTSGSAHPNTVKVGTVTRAQLEDIAKAKNADLTAADMEAAVRTIAGSARSMGLNVEGV.

Belongs to the universal ribosomal protein uL11 family. Part of the ribosomal stalk of the 50S ribosomal subunit. Interacts with L10 and the large rRNA to form the base of the stalk. L10 forms an elongated spine to which L12 dimers bind in a sequential fashion forming a multimeric L10(L12)X complex. Post-translationally, one or more lysine residues are methylated.

Its function is as follows. Forms part of the ribosomal stalk which helps the ribosome interact with GTP-bound translation factors. In Pseudomonas savastanoi pv. phaseolicola (strain 1448A / Race 6) (Pseudomonas syringae pv. phaseolicola (strain 1448A / Race 6)), this protein is Large ribosomal subunit protein uL11.